The primary structure comprises 497 residues: Guanosine-5'-triphosphate,3'-diphosphate pyrophosphatase (497 aa).

This sequence belongs to the GppA/Ppx family. GppA subfamily.

It catalyses the reaction guanosine 3'-diphosphate 5'-triphosphate + H2O = guanosine 3',5'-bis(diphosphate) + phosphate + H(+). It participates in purine metabolism; ppGpp biosynthesis; ppGpp from GTP: step 2/2. Catalyzes the conversion of pppGpp to ppGpp. Guanosine pentaphosphate (pppGpp) is a cytoplasmic signaling molecule which together with ppGpp controls the 'stringent response', an adaptive process that allows bacteria to respond to amino acid starvation, resulting in the coordinated regulation of numerous cellular activities. The protein is Guanosine-5'-triphosphate,3'-diphosphate pyrophosphatase of Vibrio vulnificus (strain YJ016).